The primary structure comprises 95 residues: Small ribosomal subunit protein uS19 (95 aa).

The protein belongs to the universal ribosomal protein uS19 family.

Protein S19 forms a complex with S13 that binds strongly to the 16S ribosomal RNA. This chain is Small ribosomal subunit protein uS19, found in Syntrophobacter fumaroxidans (strain DSM 10017 / MPOB).